The sequence spans 432 residues: Amino acid transporter ANT1 (432 aa).

The interval 1-30 (MAIKDLTATTGDSSLPLIKSPPSETTGGDR) is disordered. Residues 1-35 (MAIKDLTATTGDSSLPLIKSPPSETTGGDRTSALQ) are Cytoplasmic-facing. A helical transmembrane segment spans residues 36 to 56 (TLGNIIVSIVGTGVLGLPYAF). The Lumenal portion of the chain corresponds to 57–62 (RIAGWL). A helical membrane pass occupies residues 63-83 (AGSLGVIIVGFATYYCMLLLI). Over 84–115 (QCRDKLESEEGEEESKTYGDLGFKCMGTKGRY) the chain is Cytoplasmic. Residues 116 to 136 (LTEFLIFTAQCGGSVAYLVFI) form a helical membrane-spanning segment. Residues 137–147 (GRNLSSIFSSY) are Lumenal-facing. The chain crosses the membrane as a helical span at residues 148–168 (GLSMVSFILILVPIEVGLSWI). Residues 169–172 (TSLS) lie on the Cytoplasmic side of the membrane. The helical transmembrane segment at 173–193 (ALSPFSIFADICNIIAMCFVV) threads the bilayer. Residues 194–219 (KENVEMVIEGDFSFSDRTAISSTIGG) lie on the Lumenal side of the membrane. The helical transmembrane segment at 220-240 (LPFAGGVAVFCFEGFAMTLAL) threads the bilayer. Topologically, residues 241 to 256 (ESSMREREAFPKLLAK) are cytoplasmic. Residues 257–277 (VLAGITFVYVLFGFCGYMAYG) form a helical membrane-spanning segment. At 278–292 (DQTKDIITLNLPNNW) the chain is on the lumenal side. The helical transmembrane segment at 293 to 313 (SAIAVQIGLCVGLTFTFPIMV) threads the bilayer. The Cytoplasmic portion of the chain corresponds to 314–353 (HPLNEIIEQKLKRIDWLQKHHNGYSNETGSVSKFAIFTTR). A helical membrane pass occupies residues 354 to 374 (TLLVVGLAAIASLVPGFGTFA). Residues 375 to 379 (SLVGS) are Lumenal-facing. The helical transmembrane segment at 380 to 400 (TLCALISFVLPASYHLTLLGP) threads the bilayer. Over 401-410 (SLNVWNKSID) the chain is Cytoplasmic. Residues 411-431 (VFIVICGLIFAVYGTYNTIVG) form a helical membrane-spanning segment. Val-432 is a topological domain (lumenal).

The protein belongs to the amino acid/polyamine transporter 2 family. Amino acid/auxin permease (AAAP) (TC 2.A.18.8) subfamily. Ubiquitous. Highly expressed in flowers and cauline leaves and at lower levels in stems, leaves and roots.

Its subcellular location is the endoplasmic reticulum membrane. Functionally, translocates aromatic and neutral amino acids such as tyrosine, tryptophan, phenylalanine, histidine, proline, leucine, valine, glutamine, as well as arginine. Transports the auxins indole-3-acetic acid (IAA) and 2,4-dichlorophenoxyacetic acid (2,4-D). The polypeptide is Amino acid transporter ANT1 (Arabidopsis thaliana (Mouse-ear cress)).